Reading from the N-terminus, the 351-residue chain is Cytochrome c biogenesis protein CcsA (351 aa).

8 helical membrane passes run 17–37, 38–58, 68–88, 97–117, 143–163, 259–279, 286–306, and 320–340; these read VLFLTMLLYWIGAAFPGLPAI, NALGTAGMAIANLSIATLLGA, LSNLYESLFFLSWGITTVHLI, LVGVFTTPVAMGIVAFATLTL, MMLSYSALMVGSLLAIAFLVI, IIGLGFPLLTIGIIAGAVWAN, WSWDPKETWALITWLVFAAYL, and AILAASGFVVVWICYLGVNLL.

It belongs to the CcmF/CycK/Ccl1/NrfE/CcsA family. May interact with ccs1.

Its subcellular location is the cellular thylakoid membrane. Required during biogenesis of c-type cytochromes (cytochrome c6 and cytochrome f) at the step of heme attachment. This chain is Cytochrome c biogenesis protein CcsA, found in Nostoc sp. (strain PCC 7120 / SAG 25.82 / UTEX 2576).